A 450-amino-acid chain; its full sequence is Phosphoglucosamine mutase (450 aa).

The Phosphoserine intermediate role is filled by S102. S102, D242, D244, and D246 together coordinate Mg(2+). S102 is modified (phosphoserine).

Belongs to the phosphohexose mutase family. Requires Mg(2+) as cofactor. Activated by phosphorylation.

The enzyme catalyses alpha-D-glucosamine 1-phosphate = D-glucosamine 6-phosphate. Functionally, catalyzes the conversion of glucosamine-6-phosphate to glucosamine-1-phosphate. This Lachnospira eligens (strain ATCC 27750 / DSM 3376 / VPI C15-48 / C15-B4) (Eubacterium eligens) protein is Phosphoglucosamine mutase.